The sequence spans 381 residues: uncharacterized protein (381 aa).

Transmembrane regions (helical) follow at residues 10 to 29, 75 to 93, 98 to 117, 130 to 147, 157 to 179, 199 to 221, 236 to 255, 262 to 284, 289 to 311, 323 to 340, and 355 to 374; these read IFFSLFGIFIFSCINAINFY, IILISLSLLIICTINLIIL, LIKINFILINFGIFSYFTSR, YLFLACIILLWAGGNLMV, TNNTIVICALLYCINILTEFLHY, IELQLLTGFVVSYITLNILWYYE, LILKYIFLTICFAIIPICYI, YFANLSLNIILLICFILLPIHGT, NILYIILIGNCLGAIFICNILIL, ALLSYFSMCSIGIYAGAL, and LFSVFAVVGSFVTYHFWYFI.

It localises to the cell membrane. This is an uncharacterized protein from Rickettsia prowazekii (strain Madrid E).